The primary structure comprises 449 residues: Putative F-box/FBD/LRR-repeat protein At5g62970 (449 aa).

The F-box domain maps to 2–50 (DKISGFSDDELLVKILSFLPFKFAITTSVLSKQWKFLWMRVPKLEYDED). LRR repeat units follow at residues 27-52 (TTSV…EDSM), 81-107 (GHRM…RLKF), 158-185 (TLKL…HLER), 186-211 (VTYG…VVEL), 252-279 (YFKL…NITA), and 328-354 (IHNA…EFDE). In terms of domain architecture, FBD spans 368–418 (FWNQPNSVPQCLLSTLQTFEWSGYPGSVQGKDLATYILRKSRQLKIATISI).

The chain is Putative F-box/FBD/LRR-repeat protein At5g62970 from Arabidopsis thaliana (Mouse-ear cress).